The chain runs to 666 residues: DNA-directed RNA polymerase subunit beta' (666 aa).

Zn(2+)-binding residues include cysteine 69, cysteine 71, cysteine 87, and cysteine 90. Mg(2+)-binding residues include aspartate 489, aspartate 491, and aspartate 493.

The protein belongs to the RNA polymerase beta' chain family. RpoC1 subfamily. In plastids the minimal PEP RNA polymerase catalytic core is composed of four subunits: alpha, beta, beta', and beta''. When a (nuclear-encoded) sigma factor is associated with the core the holoenzyme is formed, which can initiate transcription. Mg(2+) is required as a cofactor. Requires Zn(2+) as cofactor.

It is found in the plastid. It localises to the chloroplast. The enzyme catalyses RNA(n) + a ribonucleoside 5'-triphosphate = RNA(n+1) + diphosphate. Its function is as follows. DNA-dependent RNA polymerase catalyzes the transcription of DNA into RNA using the four ribonucleoside triphosphates as substrates. The chain is DNA-directed RNA polymerase subunit beta' from Chara vulgaris (Common stonewort).